We begin with the raw amino-acid sequence, 78 residues long: Acyl carrier protein (78 aa).

In terms of domain architecture, Carrier spans 2 to 77; it reads SDVLERVSKI…DAVKFISEKV (76 aa). Serine 37 bears the O-(pantetheine 4'-phosphoryl)serine mark.

It belongs to the acyl carrier protein (ACP) family. 4'-phosphopantetheine is transferred from CoA to a specific serine of apo-ACP by AcpS. This modification is essential for activity because fatty acids are bound in thioester linkage to the sulfhydryl of the prosthetic group.

It is found in the cytoplasm. It participates in lipid metabolism; fatty acid biosynthesis. Functionally, carrier of the growing fatty acid chain in fatty acid biosynthesis. The protein is Acyl carrier protein of Maricaulis maris (strain MCS10) (Caulobacter maris).